The following is a 313-amino-acid chain: Platelet glycoprotein VI (313 aa).

A signal peptide spans Met-1–Thr-21. Residues Gln-22–Lys-265 are Extracellular-facing. Ig-like C2-type domains are found at residues Pro-27 to Glu-105 and Pro-115 to Asp-197. An intrachain disulfide couples Cys-49 to Cys-89. Asn-93 is a glycosylation site (N-linked (GlcNAc...) asparagine). Cys-135 and Cys-181 are joined by a disulfide. A disordered region spans residues Val-213 to Ile-236. N-linked (GlcNAc...) asparagine glycosylation is present at Asn-244. The chain crosses the membrane as a helical span at residues Gly-266 to Ala-286. Over Glu-287 to Ala-313 the chain is Cytoplasmic.

As to quaternary structure, associated with Fc receptor gamma chain. The GPVI:FcRgamma complex is associated with the Src kinase family FYN and LYN. Interacts with TRAF4. Interacts with COL1A1, but not with COL4A4. In terms of tissue distribution, megakaryocytes and platelets.

The protein localises to the cell membrane. Collagen receptor involved in collagen-induced platelet adhesion and activation. Plays a key role in platelet procoagulant activity and subsequent thrombin and fibrin formation. This procoagulant function may contribute to arterial and venous thrombus formation. The signaling pathway involves the FcR gamma-chain, the Src kinases (likely FYN or LYN) and SYK, the adapter protein LAT and leads to the activation of PLCG2. This chain is Platelet glycoprotein VI, found in Mus musculus (Mouse).